The following is a 333-amino-acid chain: Gap junction alpha-4 protein (333 aa).

Residues 1-20 (MGDWGFLEKLLDQVQEHSTV) are Cytoplasmic-facing. A helical transmembrane segment spans residues 21–40 (VGKIWLTVLFIFRILILGLA). Residues 41–76 (GESVWGDEQSDFECNTAQPGCTNVCYDQAFPISHIR) are Extracellular-facing. Residues 77 to 99 (YWVLQFLFVSTPTLIYLGHVIYL) form a helical membrane-spanning segment. Residues 100-148 (SRREERLRQKEGELRALPSKDLHVERALAAIEHQMAKISVAEDGRLRIR) are Cytoplasmic-facing. Residues 149–171 (GALMGTYVVSVLCKSVLEAGFLY) form a helical membrane-spanning segment. Residues 172–208 (GQWRLYGWTMEPVFVCQRAPCPHIVDCYVSRPTEKTI) lie on the Extracellular side of the membrane. The chain crosses the membrane as a helical span at residues 209–231 (FIIFMLVVGVISLVLNLLELVHL). The Cytoplasmic segment spans residues 232-333 (LCRCVSREIK…NSSASKKQYV (102 aa)). The segment at 292 to 333 (ANLTTEERLTSSRPPPFVNTAPQGGRKSPSRPNSSASKKQYV) is disordered. The span at 321 to 333 (SRPNSSASKKQYV) shows a compositional bias: polar residues.

The protein belongs to the connexin family. Alpha-type (group II) subfamily. As to quaternary structure, a connexon is composed of a hexamer of connexins. As to expression, highly expressed in lung.

It localises to the cell membrane. Its subcellular location is the cell junction. The protein resides in the gap junction. Its function is as follows. One gap junction consists of a cluster of closely packed pairs of transmembrane channels, the connexons, through which materials of low MW diffuse from one cell to a neighboring cell. This Mus musculus (Mouse) protein is Gap junction alpha-4 protein (Gja4).